Consider the following 377-residue polypeptide: Protein RecA (377 aa).

65–72 (GPESSGKT) serves as a coordination point for ATP. The interval 329 to 377 (GDEEAAATKATETKTDAPKDKDKGKTKAKDKPADVTPGQIELAPDKSAK) is disordered. A compositionally biased stretch (basic and acidic residues) spans 339-361 (TETKTDAPKDKDKGKTKAKDKPA).

Belongs to the RecA family.

Its subcellular location is the cytoplasm. In terms of biological role, can catalyze the hydrolysis of ATP in the presence of single-stranded DNA, the ATP-dependent uptake of single-stranded DNA by duplex DNA, and the ATP-dependent hybridization of homologous single-stranded DNAs. It interacts with LexA causing its activation and leading to its autocatalytic cleavage. This Levilactobacillus brevis (strain ATCC 367 / BCRC 12310 / CIP 105137 / JCM 1170 / LMG 11437 / NCIMB 947 / NCTC 947) (Lactobacillus brevis) protein is Protein RecA.